A 445-amino-acid chain; its full sequence is Bifunctional protein GlmU (445 aa).

The segment at 1–218 is pyrophosphorylase; it reads MRALVLAAGK…LLEITGVNTR (218 aa). UDP-N-acetyl-alpha-D-glucosamine is bound by residues 6-9, Lys20, Gln69, 74-75, 96-98, Gly134, Glu147, Asn162, and Asn216; these read LAAG, GT, and YGD. Asp98 is a binding site for Mg(2+). Residue Asn216 coordinates Mg(2+). Residues 219 to 239 are linker; it reads KTLVWLEEQLRMRKIEELLEN. The N-acetyltransferase stretch occupies residues 240-445; that stretch reads GVTILDPATT…GWVLKKRKEE (206 aa). Arg321 and Lys339 together coordinate UDP-N-acetyl-alpha-D-glucosamine. His351 serves as the catalytic Proton acceptor. Residues Tyr354 and Asn365 each coordinate UDP-N-acetyl-alpha-D-glucosamine. Acetyl-CoA-binding positions include Ala368, 374–375, Ser393, Ala411, and Arg428; that span reads NY.

The protein in the N-terminal section; belongs to the N-acetylglucosamine-1-phosphate uridyltransferase family. It in the C-terminal section; belongs to the transferase hexapeptide repeat family. In terms of assembly, homotrimer. Requires Mg(2+) as cofactor.

The protein localises to the cytoplasm. It carries out the reaction alpha-D-glucosamine 1-phosphate + acetyl-CoA = N-acetyl-alpha-D-glucosamine 1-phosphate + CoA + H(+). The enzyme catalyses N-acetyl-alpha-D-glucosamine 1-phosphate + UTP + H(+) = UDP-N-acetyl-alpha-D-glucosamine + diphosphate. It functions in the pathway nucleotide-sugar biosynthesis; UDP-N-acetyl-alpha-D-glucosamine biosynthesis; N-acetyl-alpha-D-glucosamine 1-phosphate from alpha-D-glucosamine 6-phosphate (route II): step 2/2. The protein operates within nucleotide-sugar biosynthesis; UDP-N-acetyl-alpha-D-glucosamine biosynthesis; UDP-N-acetyl-alpha-D-glucosamine from N-acetyl-alpha-D-glucosamine 1-phosphate: step 1/1. It participates in bacterial outer membrane biogenesis; LPS lipid A biosynthesis. Catalyzes the last two sequential reactions in the de novo biosynthetic pathway for UDP-N-acetylglucosamine (UDP-GlcNAc). The C-terminal domain catalyzes the transfer of acetyl group from acetyl coenzyme A to glucosamine-1-phosphate (GlcN-1-P) to produce N-acetylglucosamine-1-phosphate (GlcNAc-1-P), which is converted into UDP-GlcNAc by the transfer of uridine 5-monophosphate (from uridine 5-triphosphate), a reaction catalyzed by the N-terminal domain. In Thermotoga sp. (strain RQ2), this protein is Bifunctional protein GlmU.